The chain runs to 488 residues: Catalase (488 aa).

The disordered stretch occupies residues 1 to 24; sequence MTERKNLTTNQGTPVGDNQNSMTA. The segment covering 7–23 has biased composition (polar residues); it reads LTTNQGTPVGDNQNSMT. Active-site residues include H55 and N128. Residue Y338 participates in heme binding.

The protein belongs to the catalase family. Heme serves as cofactor.

The protein localises to the cytoplasm. The enzyme catalyses 2 H2O2 = O2 + 2 H2O. In terms of biological role, decomposes hydrogen peroxide into water and oxygen; serves to protect cells from the toxic effects of hydrogen peroxide. This chain is Catalase (kat), found in Listeria innocua serovar 6a (strain ATCC BAA-680 / CLIP 11262).